Reading from the N-terminus, the 434-residue chain is Glutamyl-tRNA reductase (434 aa).

Substrate contacts are provided by residues 57–60 (TCNR), Ser-116, 121–123 (ETQ), and Gln-127. The active-site Nucleophile is the Cys-58. Position 196-201 (196-201 (GAGEMI)) interacts with NADP(+).

Belongs to the glutamyl-tRNA reductase family. Homodimer.

The enzyme catalyses (S)-4-amino-5-oxopentanoate + tRNA(Glu) + NADP(+) = L-glutamyl-tRNA(Glu) + NADPH + H(+). The protein operates within porphyrin-containing compound metabolism; protoporphyrin-IX biosynthesis; 5-aminolevulinate from L-glutamyl-tRNA(Glu): step 1/2. In terms of biological role, catalyzes the NADPH-dependent reduction of glutamyl-tRNA(Glu) to glutamate 1-semialdehyde (GSA). This is Glutamyl-tRNA reductase from Burkholderia pseudomallei (strain 1106a).